The following is a 245-amino-acid chain: Geranylgeranylglyceryl phosphate synthase (245 aa).

2 residues coordinate Mg(2+): Asp22 and Ser51. Sn-glycerol 1-phosphate-binding positions include 169–175, 200–201, and 222–223; these read YLEAGSG, GG, and GT.

Belongs to the GGGP/HepGP synthase family. Group II subfamily. In terms of assembly, homopentamer. It depends on Mg(2+) as a cofactor.

It is found in the cytoplasm. It catalyses the reaction sn-glycerol 1-phosphate + (2E,6E,10E)-geranylgeranyl diphosphate = sn-3-O-(geranylgeranyl)glycerol 1-phosphate + diphosphate. The protein operates within membrane lipid metabolism; glycerophospholipid metabolism. Inhibited by EDTA in vitro. Functionally, prenyltransferase that catalyzes the transfer of the geranylgeranyl moiety of geranylgeranyl diphosphate (GGPP) to the C3 hydroxyl of sn-glycerol-1-phosphate (G1P). This reaction is the first ether-bond-formation step in the biosynthesis of archaeal membrane lipids. Cannot use sn-glycerol-3-phosphate (G3P) or dihydroxyacetonephosphate (DHAP) as substrate. The sequence is that of Geranylgeranylglyceryl phosphate synthase from Methanothermobacter marburgensis (strain ATCC BAA-927 / DSM 2133 / JCM 14651 / NBRC 100331 / OCM 82 / Marburg) (Methanobacterium thermoautotrophicum).